Reading from the N-terminus, the 128-residue chain is Large ribosomal subunit protein uL22 (128 aa).

The protein belongs to the universal ribosomal protein uL22 family. As to quaternary structure, part of the 50S ribosomal subunit.

This protein binds specifically to 23S rRNA; its binding is stimulated by other ribosomal proteins, e.g. L4, L17, and L20. It is important during the early stages of 50S assembly. It makes multiple contacts with different domains of the 23S rRNA in the assembled 50S subunit and ribosome. Functionally, the globular domain of the protein is located near the polypeptide exit tunnel on the outside of the subunit, while an extended beta-hairpin is found that lines the wall of the exit tunnel in the center of the 70S ribosome. This is Large ribosomal subunit protein uL22 from Prochlorococcus marinus (strain MIT 9312).